The sequence spans 513 residues: Ribonuclease Y (513 aa).

A helical transmembrane segment spans residues 4-24; that stretch reads NTAIIIAITTGFVAFIGGYFL. One can recognise a KH domain in the interval 203–266; it reads TVAVIPLPNE…ETARMALEKL (64 aa). Positions 329-422 constitute an HD domain; sequence VLKHSVEVAY…IQAADAISAA (94 aa).

The protein belongs to the RNase Y family.

The protein resides in the cell membrane. Functionally, endoribonuclease that initiates mRNA decay. This chain is Ribonuclease Y, found in Desulforudis audaxviator (strain MP104C).